Reading from the N-terminus, the 175-residue chain is Chromobox protein homolog hpl-2 (175 aa).

The 60-residue stretch at 19 to 78 (FMVEKVLDKRTGKAGRDEFLIQWQGFPESDSSWEPRENLQCVEMLDEFEREFSKREKPIR) folds into the Chromo domain. Residues 71–109 (SKREKPIRKRHSQKPEPSEDQADPEEDKDEKKETNQNDK) are disordered. The segment covering 88–98 (SEDQADPEEDK) has biased composition (acidic residues). Over residues 99-109 (DEKKETNQNDK) the composition is skewed to basic and acidic residues. The region spanning 115 to 172 (KQLKCIVGLTKGPGELHFLCKFSDDTARLLPAKEVNSRYPSQVIRYYESKLTIQDPKA) is the Chromo 2; shadow subtype domain.

In terms of assembly, interacts with histone H3 when di-, or tri-methylated at 'Lys-27' (H3K27me2/me3), or tri-methylated at 'Lys-9' (H3K9me3). Interacts with Tar DNA-binding protein homolog tdp-1; interaction may maintain localization of hpl-2 to gene bodies. Interacts with histone H1 his-24, probably via interaction with hpl-1. Interacts with chromobox protein homolog hpl-1. As to quaternary structure, may form homodimers. Interacts (via chromo (shadow subtype) domain) with zinc finger protein lin-13 (via PLVPV motif); the interaction is direct and influences localization of hpl-2 to nuclear foci.

The protein resides in the nucleus. The protein localises to the chromosome. In terms of biological role, seems to be involved in transcriptional silencing in heterochromatin-like complexes. Probably does not act as global transcriptional repressor, instead targeting a subset of genes. Involved in RNA processing mediated by Tar DNA-binding protein homolog tdp-1. Plays a role in linking epigenetic regulation with the innate immune response. Involved in the endoplasmic reticulum (ER) stress response via modulation of the unfolded protein response (UPR), acting mainly through the IRE1-XBP1 pathway and perhaps, to a lesser extent, through the autophagy pathway. May act in a common pathway with retinoblastoma-like protein homolog lin-35 and zinc finger protein lin-13 to influence the ER stress response in the intestine. Plays a role in the formation of the vulva and in fertility, acting together with a CoREST-like complex, and chromobox protein homolog hpl-1. Acting in concert with hpl-1 and histone H1 protein his-24, involved in reproduction, somatic gonad development, male tail development and vulval cell fate specification; perhaps as a result of modulating expression of Hox genes mab-5 and egl-5. In vulval cell fate specification may act by repressing transcription, of EGF family gene lin-3 in hypodermal hyp7, and of homeobox lin-39 in vulval precursor cells (VPC). Role in growth and somatic gonad development is antagonized by histone-lysine N-methyltransferase set-2/SET1. Required for larval development, acting redundantly with hpl-1. Plays a role in regulation of the developmentally arrested larval state known as dauer, longevity, and lipid metabolism. This chain is Chromobox protein homolog hpl-2, found in Caenorhabditis elegans.